Here is a 167-residue protein sequence, read N- to C-terminus: MAAAGAFRLRRAASALLLRSPRLPARELSAPARLYHKKVVDHYENPRNVGSLDKTSKNVGTGLVGAPACGDVMKLQIQVDEKGKIVDARFKTFGCGSAIASSSLATEWVKGKTVEEALTIKNTDIAKELCLPPVKLHCSMLAEDAIKAALADYKLKQEPKKGEAEKK.

The transit peptide at 1–34 (MAAAGAFRLRRAASALLLRSPRLPARELSAPARL) directs the protein to the mitochondrion. At Ser-14 the chain carries Phosphoserine; by MTOR. Pro-46 is a Zn(2+) binding site. Residue Cys-69 is the Cysteine persulfide intermediate of the active site. Position 69 is a cysteine persulfide (Cys-69). Zn(2+)-binding residues include Gly-70, Asp-71, Cys-95, Lys-112, and Cys-138. Residue Cys-138 is the Cysteine persulfide intermediate of the active site. Cys-138 carries the post-translational modification Cysteine persulfide.

It belongs to the NifU family. As to quaternary structure, homodimer; Tyr-35-mediated dimerization of two iron- and sulfide-containing ISCU subunit bind to the cysteine desulfurase complex. Component of the mitochondrial core iron-sulfur cluster (ISC) complex composed of NFS1, LYRM4, NDUFAB1, ISCU, FXN, and FDX2; this complex is an heterohexamer containing two copies of each monomer. Interacts (D-state) with NFS1 (homodimer form); each monomer interacts with the C-terminal regions of each NFS1 monomer. Interacts (monomer form) with FXN (via ferrous form); the interaction is possible when both are bound to the dimeric form of the cysteine desulfurase complex (NFS1:LYRM4) and enhances FXN interaction to the dimeric form of the cysteine desulfurase complex (NFS1:LYRM4). Interacts with GLRX5. Interacts (D-state) with HSPA9. Interacts (S-state) with HSCB; this interaction stimulates the ATPase activity of HSPA9. In terms of assembly, component of the cytoplasmic core iron-sulfur cluster (ISC) complex composed at least of NFS1, LYRM4, and ISCU; this complex interacts with FXN. Monomer; each monomer binds to the C-terminal regions of NFS1 (cytoplasmic and homodimer form). Interacts with NFS1 (cytoplasmic and homodimer form); this interaction promotes de novo iron-sulfur cluster formation. Interacts with HSCB (cytoplasmic form); this interaction stabilizes the (Fe-S) clusters on ISCU. Post-translationally, phosphorylation at Ser-14 is required for ISCU protein stabilization in the cytosol, whereas dephosphorylation of Ser-14, due to the inhibition of mTORC1 (mammalian target of rapamycin complex 1) complex, leads to degradation of the precursor form and ultimately to a decrease in the mitochondrial mature form. Cysteine persulfide is reduced by thiol-containing molecules such as glutathione and L-cysteine. As to expression, detected in heart, liver, skeletal muscle, brain, pancreas, kidney, lung and placenta.

The protein resides in the mitochondrion. The protein localises to the cytoplasm. It is found in the nucleus. Functionally, mitochondrial scaffold protein, of the core iron-sulfur cluster (ISC) assembly complex, that provides the structural architecture on which the [2Fe-2S] clusters are assembled. The core iron-sulfur cluster (ISC) assembly complex is involved in the de novo synthesis of a [2Fe-2S] cluster, the first step of the mitochondrial iron-sulfur protein biogenesis. This process is initiated by the cysteine desulfurase complex (NFS1:LYRM4:NDUFAB1) that produces persulfide which is delivered on the scaffold protein ISCU in a FXN-dependent manner. Then this complex is stabilized by FDX2 which provides reducing equivalents to accomplish the [2Fe-2S] cluster assembly. Finally, the [2Fe-2S] cluster is transferred from ISCU to chaperone proteins, including HSCB, HSPA9 and GLRX5. Exists as two slow interchanging conformational states, a structured (S) and disordered (D) form. May modulate NFS1 desulfurase activity in a zinc-dependent manner. Modulates the interaction between FXN and the cysteine desulfurase complex. Cytoplasmic scaffold protein, of the cytoplasmic core iron-sulfur cluster (ISC) assembly complex that provides the structural architecture on which the Fe-S clusters are assembled and may be involved in the cytoplasmic iron-sulfur protein biogenesis. The protein is Iron-sulfur cluster assembly enzyme ISCU of Homo sapiens (Human).